The chain runs to 291 residues: Translocon-associated protein subunit alpha (291 aa).

A signal peptide spans 1-20; sequence MRLLPRLLLLLLLVFPATVL. The Lumenal segment spans residues 21 to 207; the sequence is FRGGPRGSLA…EREDGLDGET (187 aa). The tract at residues 34 to 83 is disordered; sequence DLTEDEETVEDSIIEDEDDEAEVEEDEPTDLVEDKEEEDVSGEPEASPSA. Residues 35–75 show a composition bias toward acidic residues; the sequence is LTEDEETVEDSIIEDEDDEAEVEEDEPTDLVEDKEEEDVSG. Asn-136 and Asn-191 each carry an N-linked (GlcNAc...) asparagine glycan. Residues 208–228 traverse the membrane as a helical segment; it reads IFMYMFLAGLGLLVIVGLHQL. Topologically, residues 229–291 are cytoplasmic; sequence LESRKRKRPV…AQKRSVGSDE (63 aa). Ser-247 bears the Phosphoserine mark. Thr-260 bears the Phosphothreonine mark. Residues 263-291 are disordered; it reads QIMQSRRDKASPRRLPRKRAQKRSVGSDE. Position 273 is a phosphoserine (Ser-273). Over residues 274–284 the composition is skewed to basic residues; that stretch reads PRRLPRKRAQK.

This sequence belongs to the TRAP-alpha family. In terms of assembly, heterotetramer of TRAP-alpha, TRAP-beta, TRAP-delta and TRAP-gamma. Interacts with palmitoylated calnexin (CALX), the interaction is required for efficient folding of glycosylated proteins. In terms of processing, phosphorylated in its cytoplasmic tail.

It is found in the endoplasmic reticulum membrane. In terms of biological role, TRAP proteins are part of a complex whose function is to bind calcium to the ER membrane and thereby regulate the retention of ER resident proteins. May be involved in the recycling of the translocation apparatus after completion of the translocation process or may function as a membrane-bound chaperone facilitating folding of translocated proteins. This is Translocon-associated protein subunit alpha (SSR1) from Pongo abelii (Sumatran orangutan).